The primary structure comprises 156 residues: Phosphoribosyl-AMP cyclohydrolase (156 aa).

Aspartate 106 lines the Mg(2+) pocket. Residue cysteine 107 coordinates Zn(2+). The Mg(2+) site is built by aspartate 108 and aspartate 110. Zn(2+) contacts are provided by cysteine 123 and cysteine 130.

This sequence belongs to the PRA-CH family. Homodimer. Mg(2+) is required as a cofactor. Requires Zn(2+) as cofactor.

The protein localises to the cytoplasm. It catalyses the reaction 1-(5-phospho-beta-D-ribosyl)-5'-AMP + H2O = 1-(5-phospho-beta-D-ribosyl)-5-[(5-phospho-beta-D-ribosylamino)methylideneamino]imidazole-4-carboxamide. It functions in the pathway amino-acid biosynthesis; L-histidine biosynthesis; L-histidine from 5-phospho-alpha-D-ribose 1-diphosphate: step 3/9. Its function is as follows. Catalyzes the hydrolysis of the adenine ring of phosphoribosyl-AMP. This chain is Phosphoribosyl-AMP cyclohydrolase, found in Gluconobacter oxydans (strain 621H) (Gluconobacter suboxydans).